Reading from the N-terminus, the 381-residue chain is MVYNFKVFKKCAPNGKITLYMAKRDFVDHISTVEPIDGVVLLDEEYVRGRKVFGQMVCTFRYGREEDEVMGLNFYKELFLASEQIYPPPEKRNYELSRTQERLIKKLGDGAIPFRLTVPPGAPGSVILQPGLEDDGEPCGVQYYVKIFVGDSEIDRSHRRSTVALGIRKVQYAPAKPGPQPCTVVRKDFVLSPGQLELELTLDKQLYIHGETVAVNMCVRNHSNKVVKKIKACIQQGVDVVLFQNGQYRNIVASIETQDGCPLQPGSSLQKVLHLTPTLAHNRDKRGIALDGQLKRSDTTLASTTLLLDPDQRDAFGIVVSYSAKVKLYLGAISGELVAELPFILMHPKEGRVKMIHADSQADVEMFRQDTVHHQESVEVY.

The protein belongs to the arrestin family.

This Heliothis virescens (Tobacco budworm moth) protein is Arrestin homolog.